The following is a 92-amino-acid chain: MEITDVRVRKLNEEGKMKAVVSVTFDNEFVVHDIKVIEGQNGLFIAMPSRKTPEGEFKDIAHPINSDTRNRLQSAILKEYEKAKEQEAAHKE.

The protein belongs to the SpoVG family.

Could be involved in septation. The polypeptide is Putative septation protein SpoVG (Thermoanaerobacter pseudethanolicus (strain ATCC 33223 / 39E) (Clostridium thermohydrosulfuricum)).